The following is a 236-amino-acid chain: Flagellar L-ring protein (236 aa).

The first 16 residues, 1-16 (MRMRITAILAAGLLAG), serve as a signal peptide directing secretion. Residue cysteine 17 is the site of N-palmitoyl cysteine attachment. Cysteine 17 is lipidated: S-diacylglycerol cysteine. The segment at 96-143 (ENETDRSRKNSSGFNLGASGESQTSDFAWSGDLEYGSNTKTEGDGKTE) is disordered. A compositionally biased stretch (polar residues) spans 105 to 122 (NSSGFNLGASGESQTSDF).

This sequence belongs to the FlgH family. As to quaternary structure, the basal body constitutes a major portion of the flagellar organelle and consists of four rings (L,P,S, and M) mounted on a central rod.

The protein localises to the cell outer membrane. Its subcellular location is the bacterial flagellum basal body. Its function is as follows. Assembles around the rod to form the L-ring and probably protects the motor/basal body from shearing forces during rotation. In Sinorhizobium medicae (strain WSM419) (Ensifer medicae), this protein is Flagellar L-ring protein.